Reading from the N-terminus, the 150-residue chain is Transcriptional repressor NrdR (150 aa).

A zinc finger spans residues 3–34 (CPFCQHDHSKVIDSRVIDAGSAIRRRRECSKC). One can recognise an ATP-cone domain in the interval 46-136 (LLVVKRNGVT…VYKSFDSADD (91 aa)).

Belongs to the NrdR family. Zn(2+) serves as cofactor.

Its function is as follows. Negatively regulates transcription of bacterial ribonucleotide reductase nrd genes and operons by binding to NrdR-boxes. The protein is Transcriptional repressor NrdR of Corynebacterium glutamicum (strain ATCC 13032 / DSM 20300 / JCM 1318 / BCRC 11384 / CCUG 27702 / LMG 3730 / NBRC 12168 / NCIMB 10025 / NRRL B-2784 / 534).